A 139-amino-acid polypeptide reads, in one-letter code: Large ribosomal subunit protein uL16 (139 aa).

The span at 1 to 16 (MLIPRRVKHRKQHHPG) shows a compositional bias: basic residues. A disordered region spans residues 1–25 (MLIPRRVKHRKQHHPGRSGQATGGT).

Belongs to the universal ribosomal protein uL16 family. Part of the 50S ribosomal subunit.

Its function is as follows. Binds 23S rRNA and is also seen to make contacts with the A and possibly P site tRNAs. The protein is Large ribosomal subunit protein uL16 of Leifsonia xyli subsp. xyli (strain CTCB07).